The following is a 56-amino-acid chain: MSRLFTLVLIVLAMNVMMAIISDPVVEAVGCEECPMHCKGKMAKPTCDDGVCNCNV.

The N-terminal stretch at 1-19 (MSRLFTLVLIVLAMNVMMA) is a signal peptide. Residues 20–28 (IISDPVVEA) constitute a propeptide that is removed on maturation. 3 disulfides stabilise this stretch: Cys31–Cys47, Cys34–Cys52, and Cys38–Cys54.

The protein belongs to the short scorpion toxin superfamily. Potassium channel inhibitor family. Alpha-KTx 09 subfamily. As to expression, expressed by the venom gland.

The protein resides in the secreted. Its function is as follows. Potassium channel inhibitor. The protein is Potassium channel toxin alpha-KTx 9.8 of Buthus israelis (Israeli scorpion).